A 392-amino-acid polypeptide reads, in one-letter code: Phosphoglycerate kinase (392 aa).

Substrate contacts are provided by residues 21 to 23 (DLN), Arg-36, 59 to 62 (HLGR), Arg-114, and Arg-147. Residues Lys-198, Glu-320, and 346–349 (GGDT) contribute to the ATP site.

The protein belongs to the phosphoglycerate kinase family. As to quaternary structure, monomer.

The protein resides in the cytoplasm. The enzyme catalyses (2R)-3-phosphoglycerate + ATP = (2R)-3-phospho-glyceroyl phosphate + ADP. The protein operates within carbohydrate degradation; glycolysis; pyruvate from D-glyceraldehyde 3-phosphate: step 2/5. The chain is Phosphoglycerate kinase from Nitrosomonas eutropha (strain DSM 101675 / C91 / Nm57).